The chain runs to 346 residues: Alkanal monooxygenase alpha chain (346 aa).

As to quaternary structure, heterodimer of an alpha and a beta chain.

It carries out the reaction a long-chain fatty aldehyde + FMNH2 + O2 = a long-chain fatty acid + hnu + FMN + H2O + 2 H(+). Its function is as follows. Light-emitting reaction in luminous bacteria. This chain is Alkanal monooxygenase alpha chain (luxA), found in Photobacterium phosphoreum.